A 344-amino-acid polypeptide reads, in one-letter code: 3-dehydroquinate synthase (344 aa).

NAD(+) contacts are provided by residues Asp-60–Lys-65, Gly-94–Asp-98, Thr-118–Thr-119, Lys-131, Lys-140, and Phe-158–Thr-161. Zn(2+)-binding residues include Glu-173, His-232, and His-249.

This sequence belongs to the sugar phosphate cyclases superfamily. Dehydroquinate synthase family. It depends on Co(2+) as a cofactor. Zn(2+) is required as a cofactor. The cofactor is NAD(+).

It is found in the cytoplasm. It catalyses the reaction 7-phospho-2-dehydro-3-deoxy-D-arabino-heptonate = 3-dehydroquinate + phosphate. The protein operates within metabolic intermediate biosynthesis; chorismate biosynthesis; chorismate from D-erythrose 4-phosphate and phosphoenolpyruvate: step 2/7. Functionally, catalyzes the conversion of 3-deoxy-D-arabino-heptulosonate 7-phosphate (DAHP) to dehydroquinate (DHQ). The chain is 3-dehydroquinate synthase from Campylobacter hominis (strain ATCC BAA-381 / DSM 21671 / CCUG 45161 / LMG 19568 / NCTC 13146 / CH001A).